Here is a 71-residue protein sequence, read N- to C-terminus: Small ribosomal subunit protein bS21 (71 aa).

Residues 48–71 (ENATLAKRHAKRNARENARNTRLY) form a disordered region. Over residues 60–71 (NARENARNTRLY) the composition is skewed to basic and acidic residues.

This sequence belongs to the bacterial ribosomal protein bS21 family.

This is Small ribosomal subunit protein bS21 from Haemophilus influenzae (strain 86-028NP).